An 844-amino-acid polypeptide reads, in one-letter code: Janus kinase and microtubule-interacting protein 3 (844 aa).

Positions serine 8–histidine 259 form a coiled coil. Positions glutamine 249 to lysine 290 are disordered. Over residues lysine 254 to leucine 267 the composition is skewed to basic and acidic residues. Positions alanine 270–serine 282 are enriched in low complexity. The stretch at glutamate 289–alanine 421 forms a coiled coil. Position 384 is a phosphoserine (serine 384). Polar residues predominate over residues serine 466–cysteine 483. The interval serine 466–aspartate 488 is disordered. Coiled-coil stretches lie at residues methionine 493–lysine 621 and glutamate 688–phenylalanine 833.

The protein belongs to the JAKMIP family.

The protein localises to the golgi apparatus. The chain is Janus kinase and microtubule-interacting protein 3 (Jakmip3) from Mus musculus (Mouse).